A 311-amino-acid chain; its full sequence is Heparan sulfate glucosamine 3-O-sulfotransferase 1 (311 aa).

An N-terminal signal peptide occupies residues 1 to 20 (MTLLLLGAVLLVAQPQLVHS). Asn52 carries an N-linked (GlcNAc...) asparagine glycan. 3'-phosphoadenylyl sulfate contacts are provided by residues 68–72 (KGGTR), Arg151, and Ser159. N-linked (GlcNAc...) asparagine glycosylation is found at Asn196, Asn246, and Asn253. Tyr259 is a binding site for 3'-phosphoadenylyl sulfate. Cys260 and Cys269 are disulfide-bonded. Residue 274-278 (KGRAH) coordinates 3'-phosphoadenylyl sulfate.

It belongs to the sulfotransferase 1 family.

The protein localises to the golgi apparatus lumen. The catalysed reaction is alpha-D-glucosaminyl-[heparan sulfate](n) + 3'-phosphoadenylyl sulfate = 3-sulfo-alpha-D-glucosaminyl-[heparan sulfate](n) + adenosine 3',5'-bisphosphate + H(+). Sulfotransferase that utilizes 3'-phospho-5'-adenylyl sulfate (PAPS) to catalyze the transfer of a sulfo group to position 3 of glucosamine residues in heparan. Catalyzes the rate limiting step in the biosynthesis of heparan sulfate (HSact). This modification is a crucial step in the biosynthesis of anticoagulant heparan sulfate as it completes the structure of the antithrombin pentasaccharide binding site. The polypeptide is Heparan sulfate glucosamine 3-O-sulfotransferase 1 (Hs3st1) (Mus musculus (Mouse)).